We begin with the raw amino-acid sequence, 151 residues long: Large ribosomal subunit protein bL9 (151 aa).

The protein belongs to the bacterial ribosomal protein bL9 family.

Its function is as follows. Binds to the 23S rRNA. The protein is Large ribosomal subunit protein bL9 of Chlorobium limicola (strain DSM 245 / NBRC 103803 / 6330).